The primary structure comprises 318 residues: Electron transfer flavoprotein subunit alpha (318 aa).

257 to 285 (LYIALGISGAIQHRAGMQTSKTIVAVNKD) serves as a coordination point for FAD.

Belongs to the ETF alpha-subunit/FixB family. As to quaternary structure, heterodimer of an alpha and a beta subunit. Requires FAD as cofactor.

The electron transfer flavoprotein serves as a specific electron acceptor for other dehydrogenases. It transfers the electrons to the main respiratory chain via ETF-ubiquinone oxidoreductase (ETF dehydrogenase). This Mycobacterium leprae (strain TN) protein is Electron transfer flavoprotein subunit alpha (etfA).